Consider the following 171-residue polypeptide: uncharacterized protein (171 aa).

The signal sequence occupies residues 1 to 20; it reads MRDFYLFLGAVFLLVLGVWA.

This is an uncharacterized protein from Aquifex aeolicus (strain VF5).